A 457-amino-acid polypeptide reads, in one-letter code: 11S globulin seed storage protein Ana o 2.0101 (457 aa).

Positions 1-14 (LSVCFLILFHGCLA) are cleaved as a signal peptide. Residues 15–29 (SRQEWQQQDECQIDR) are igE-binding. Intrachain disulfides connect Cys25-Cys58 and Cys101-Cys278. Conformational epitope; mouse monoclonal antibody (mAb) 2B5-binding stretches follow at residues 29-37 (RLDALEPDN) and 31-48 (DALE…TVEA). One can recognise a Cupin type-1 1 domain in the interval 30–220 (LDALEPDNRV…AFQVDERLIK (191 aa)). Binds goat polyclonal antibodies (pAbs) stretches follow at residues 32-45 (ALEP…EAGT) and 55-86 (QFRC…QLIY). Residues 34 to 57 (EPDNRVEYEAGTVEAWDPNHEQFR) are mouse monoclonal antibody (mAb) 2B5-binding. The interval 41-55 (YEAGTVEAWDPNHEQ) is mouse monoclonal antibody (mAb) 4H9-binding. The igE-binding stretch occupies residues 105-119 (YQAPQQGRQQGQSGR). Positions 215–239 (DERLIKQLKSEDNRGGIVKVKDDEL) are binds goat polyclonal antibodies (pAbs). The CD4(+) T cell-reactive epitope stretch occupies residues 233 to 252 (KVKDDELRVIRPSRSQSERG). Residues 243–270 (RPSRSQSERGSESEEESEDEKRRWGQRD) form a disordered region. The span at 261–270 (DEKRRWGQRD) shows a compositional bias: basic and acidic residues. The tract at residues 265–289 (RWGQRDNGIEETICTMRLKENINDP) is linear epitope; mouse monoclonal antibody (mAb) 1F5-binding. Positions 271–276 (NGIEET) match the NGXEET; peptidase recognition motif motif. The 150-residue stretch at 284-433 (ENINDPARAD…AFQISREDAR (150 aa)) folds into the Cupin type-1 2 domain. CD4(+) T cell-reactive epitope stretches follow at residues 289 to 308 (PARA…LNSL), 297 to 316 (PEVG…LKWL), 321 to 340 (EKGV…LNSH), 329 to 348 (ALVL…GCKG), and 377 to 396 (QNFA…ISFK). Positions 395-416 (FKTNDRAMTSPLAGRTSVLGGM) are binds goat polyclonal antibodies (pAbs), but buried in the 3D-structure model.

Belongs to the 11S seed storage protein (globulins) family. As to quaternary structure, homotrimer. Hexamer. Each subunit is composed of an acidic and a basic chain derived from a single precursor and linked by a disulfide bond. Proteolytically processed from a single precursor to produce an acidic and a basic chain that are linked by a disulfide bond. Not glycosylated. As to expression, expressed in seed (at protein level). Expressed in the juice of the cashew apple (at protein level).

Its function is as follows. Seed storage protein. The sequence is that of 11S globulin seed storage protein Ana o 2.0101 from Anacardium occidentale (Cashew).